A 784-amino-acid chain; its full sequence is ATP-dependent 6-phosphofructokinase, platelet type (784 aa).

At M1 the chain carries N-acetylmethionine. The interval 1-399 is N-terminal catalytic PFK domain 1; that stretch reads MDADDSRAPK…NLNTYKRLAI (399 aa). S6, S12, and S21 each carry phosphoserine. Residues G34, 97-98, and 127-130 each bind ATP; these read RC and GDGS. D128 serves as a coordination point for Mg(2+). Position 142 is a phosphoserine (S142). Substrate is bound by residues 173–175, R210, 217–219, E273, R301, and 307–310; these read SID, MGR, and HVQR. Residue D175 is the Proton acceptor of the active site. S386 is modified (phosphoserine). N6-acetyllysine is present on K395. The interdomain linker stretch occupies residues 400–411; the sequence is KLPDDQIPKTNC. The tract at residues 412 to 784 is C-terminal regulatory PFK domain 2; the sequence is NVAVINVGAP…QLEHVQPWSV (373 aa). A beta-D-fructose 2,6-bisphosphate-binding site is contributed by R481. An N6-acetyllysine modification is found at K486. Beta-D-fructose 2,6-bisphosphate contacts are provided by residues 538–542, R576, 583–585, and E639; these read TVSNN and MGG. O-linked (GlcNAc) serine glycosylation is present at S540. Y651 is modified (phosphotyrosine). Residues R665 and 671 to 674 contribute to the beta-D-fructose 2,6-bisphosphate site; that span reads HMQQ. K688 carries the post-translational modification N6-acetyllysine. R744 is a beta-D-fructose 2,6-bisphosphate binding site. Position 783 is a phosphoserine (S783).

It belongs to the phosphofructokinase type A (PFKA) family. ATP-dependent PFK group I subfamily. Eukaryotic two domain clade 'E' sub-subfamily. Homo- and heterotetramers. Phosphofructokinase (PFK) enzyme functions as a tetramer composed of different combinations of 3 types of subunits, called PFKM (where M stands for Muscle), PFKL (Liver) and PFKP (Platelet). The composition of the PFK tetramer differs according to the tissue type it is present in. In muscles, it is composed of 4 PFKM subunits (also called M4). In the liver, the predominant form is a tetramer of PFKL subunits (L4). In erythrocytes, both PFKM and PFKL subunits randomly tetramerize to form M4, L4 and other combinations (ML3, M2L2, M3L). In platelets, brain and fibroblasts, PFK contains a higher proportion of PFKP subunits. The kinetic and regulatory properties of the tetrameric enzyme are dependent on the subunit composition, hence can vary across tissues. Interacts with ATG4B; promoting phosphorylation of ATG4B. It depends on Mg(2+) as a cofactor. Phosphorylation at Ser-386 promotes interaction with ATG4B. In terms of processing, glcNAcylation decreases enzyme activity.

The protein resides in the cytoplasm. It catalyses the reaction beta-D-fructose 6-phosphate + ATP = beta-D-fructose 1,6-bisphosphate + ADP + H(+). Its pathway is carbohydrate degradation; glycolysis; D-glyceraldehyde 3-phosphate and glycerone phosphate from D-glucose: step 3/4. Its activity is regulated as follows. Allosterically activated by ADP, AMP, or fructose 2,6-bisphosphate, and allosterically inhibited by ATP or citrate. In terms of biological role, catalyzes the phosphorylation of D-fructose 6-phosphate to fructose 1,6-bisphosphate by ATP, the first committing step of glycolysis. The sequence is that of ATP-dependent 6-phosphofructokinase, platelet type (PFKP) from Homo sapiens (Human).